The sequence spans 645 residues: MFQDHPLLIQLKQQLYDKELRMVGVVKSTDKGFGFLEVNAQKSYFIPPLFMKKVMHGDKISAVLRIVNNRAIAEPETLIEPFLSRFVGKVQIKNDKLALLPKHPLIKEIIPASQPRSMKNTQLCHGDWVIAEMCHHPLDGYRYFYAKITELITTKDDNFAHWRVTLAHYNLEREAPAMPKYLTIQDNGLIREDLTELNFITIDHASTEDIDDALHVAYGTNGALVLTIAIADPTAWIIAGSQLDCIARDRAFTNYLPGFNIPMLPRMLSEDLCSLRAYEKRPALVCQVTMQHDGTLNEDMRFFAAWIESKAKLSYDEVSDWIENIGFWQPQNNAIAEQIRMLHIVCQARSSWRKQHALVFKDKPDYRFILEENGNVKNIIAEPRRIAKRMIEEAMITANICAARVLRDNLGFGLYNTHNGFDTTLIDQVVAILQKHNISVDATQLLTLEGFCALRRKLNTMSTSYLDSRIRRFQTLSELKTEPGPHFGLGLEVYATWTSPIRKYSDMMNHRLLKALIGAGKAERPKTDITFRMSERRRQNRIAERDVEDWLYASFLKNQVGSHIRYSAEIIDIYRNGMRIRLLDNGAIAFIPALLIHNIRDELICNQDIGIVQIQGKERYRQGDTIEVYIKEVHIDNRSIIAKIV.

In terms of domain architecture, RNB spans R191 to I517. The S1 motif domain maps to H563–V645.

Belongs to the RNR ribonuclease family. RNase II subfamily.

It is found in the cytoplasm. The catalysed reaction is Exonucleolytic cleavage in the 3'- to 5'-direction to yield nucleoside 5'-phosphates.. Involved in mRNA degradation. Hydrolyzes single-stranded polyribonucleotides processively in the 3' to 5' direction. The protein is Exoribonuclease 2 of Baumannia cicadellinicola subsp. Homalodisca coagulata.